The following is a 1006-amino-acid chain: Zinc finger protein ZFPM1 (1006 aa).

A compositionally biased stretch (basic residues) spans 1–13 (MSRRKQSNPRQIK). Disordered regions lie at residues 1–93 (MSRR…DELE) and 114–133 (SWGPFHGSVQTRASSPRQAE). Residues 15 to 25 (SLGDMEAREEV) are compositionally biased toward basic and acidic residues. Over residues 42-62 (APSPPSADVNSPPPLPPPTSP) the composition is skewed to pro residues. Residues 66 to 79 (KELEGQEPEPRPTE) are compositionally biased toward basic and acidic residues. Phosphoserine is present on residues Ser-84 and Ser-128. Polar residues predominate over residues 121-130 (SVQTRASSPR). The CCHC FOG-type 1 zinc-finger motif lies at 235-268 (VINKDVFPCKDCGIWYRSERNLQAHLLYYCASRQ). Zn(2+) contacts are provided by Cys-243, Cys-246, His-259, and Cys-264. Position 272 is a phosphoserine (Ser-272). 3 consecutive C2H2-type zinc fingers follow at residues 290-314 (RVCPFPQCRKSCPSASSLEIHMRSH), 320-342 (FVCLICLSAFTTKANCERHLKVH), and 348-371 (GVCHSCGFISTTRDILYSHLVTNH). The interval 330 to 341 (TTKANCERHLKV) is interaction with TACC3. Ser-384 bears the Phosphoserine mark. Disordered stretches follow at residues 384–409 (SPGAGHPATKLPPDSLGSFQQQHTAL), 438–460 (NGEARAEPLAQNGGSSEPPAAPR), and 473–515 (APIL…SPVP). Positions 485-515 (APSRTPSPRSPAPARVKAELSSPTPGSSPVP) are enriched in low complexity. Phosphoserine occurs at positions 491 and 494. The CCHC FOG-type 2 zinc-finger motif lies at 571–604 (PGAPKGATCFECEITFSNVNNYYVHKRLYCSGRR). Residues Cys-579, Cys-582, His-595, and Cys-600 each coordinate Zn(2+). Residues 605–681 (APEDAPAARR…SVDDAEDDPS (77 aa)) form a disordered region. The span at 617 to 629 (APPGPARAPPGQP) shows a compositional bias: pro residues. Residues Ser-638 and Ser-671 each carry the phosphoserine modification. The CCHC FOG-type 3 zinc finger occupies 677 to 710 (EDDPSRTLCEACNIRFSRHETYTVHKRYYCASRH). Cys-685, Cys-688, His-701, and Cys-706 together coordinate Zn(2+). Residues 708–810 (SRHDPPPRRP…PRRPLPGAPA (103 aa)) form a disordered region. Composition is skewed to pro residues over residues 715 to 735 (RRPAAPPGPPGPAAPPAPSPA) and 754 to 769 (APPPPPPGHAPAPESP). The segment covering 780–791 (GLAPARSPGPAA) has biased composition (low complexity). Phosphoserine is present on Ser-786. The interval 794-800 (PIDLSKK) is interaction with CTBP2. Residues 811–844 (PALADYHECTACRVSFHSLEAYLAHKKYSCPAAP) form a CCHC FOG-type 4 zinc finger. Cys-819, Cys-822, His-835, and Cys-840 together coordinate Zn(2+). The C2H2-type 4 zinc-finger motif lies at 854–877 (AACPYCPPNGPVRGDLLEHFRLAH). A disordered region spans residues 889-971 (GVEARTPADR…KGTPAPLPNG (83 aa)). Phosphoserine is present on residues Ser-901, Ser-909, Ser-914, and Ser-935. Residues 925–950 (PQEPPPGPPPSPAAAPEAVPPPPAPP) show a composition bias toward pro residues. Residues 968–1001 (LPNGNHRYCRLCNIKFSSLSTFIAHKKYYCSSHA) form a CCHC FOG-type 5 zinc finger. 4 residues coordinate Zn(2+): Cys-976, Cys-979, His-992, and Cys-997.

The protein belongs to the FOG (Friend of GATA) family. In terms of assembly, interacts with corepressor CTBP2; this interaction is however not essential for corepressor activity. Interacts with the N-terminal zinc-finger of GATA1, GATA2 and probably GATA3. In terms of tissue distribution, mainly expressed in hematopoietic tissues. Also expressed in adult cerebellum, stomach, lymph node, liver and pancreas. Expressed in fetal heart, liver and spleen.

It is found in the nucleus. Its function is as follows. Transcription regulator that plays an essential role in erythroid and megakaryocytic cell differentiation. Essential cofactor that acts via the formation of a heterodimer with transcription factors of the GATA family GATA1, GATA2 and GATA3. Such heterodimer can both activate or repress transcriptional activity, depending on the cell and promoter context. The heterodimer formed with GATA proteins is essential to activate expression of genes such as NFE2, ITGA2B, alpha- and beta-globin, while it represses expression of KLF1. May be involved in regulation of some genes in gonads. May also be involved in cardiac development, in a non-redundant way with ZFPM2/FOG2. This chain is Zinc finger protein ZFPM1 (ZFPM1), found in Homo sapiens (Human).